Consider the following 64-residue polypeptide: Large ribosomal subunit protein bL32 (64 aa).

Residues 1-36 (MAVQKSRVTPSRRGQRRSHDALSAKQLSTDPTTGEV) form a disordered region.

This sequence belongs to the bacterial ribosomal protein bL32 family.

This Stenotrophomonas maltophilia (strain K279a) protein is Large ribosomal subunit protein bL32.